The primary structure comprises 696 residues: DNA-directed RNA polymerase subunit beta' (696 aa).

4 residues coordinate Zn(2+): Cys-69, Cys-71, Cys-87, and Cys-90. Mg(2+)-binding residues include Asp-504, Asp-506, and Asp-508.

Belongs to the RNA polymerase beta' chain family. RpoC1 subfamily. As to quaternary structure, in plastids the minimal PEP RNA polymerase catalytic core is composed of four subunits: alpha, beta, beta', and beta''. When a (nuclear-encoded) sigma factor is associated with the core the holoenzyme is formed, which can initiate transcription. Mg(2+) serves as cofactor. It depends on Zn(2+) as a cofactor.

Its subcellular location is the plastid. The protein resides in the chloroplast. It catalyses the reaction RNA(n) + a ribonucleoside 5'-triphosphate = RNA(n+1) + diphosphate. Functionally, DNA-dependent RNA polymerase catalyzes the transcription of DNA into RNA using the four ribonucleoside triphosphates as substrates. The chain is DNA-directed RNA polymerase subunit beta' from Pinus koraiensis (Korean pine).